We begin with the raw amino-acid sequence, 79 residues long: Sulfur carrier protein TusA (79 aa).

C16 (cysteine persulfide intermediate) is an active-site residue.

This sequence belongs to the sulfur carrier protein TusA family.

Its subcellular location is the cytoplasm. In terms of biological role, sulfur carrier protein which probably makes part of a sulfur-relay system. In Pseudomonas paraeruginosa (strain DSM 24068 / PA7) (Pseudomonas aeruginosa (strain PA7)), this protein is Sulfur carrier protein TusA.